A 291-amino-acid polypeptide reads, in one-letter code: Small ribosomal subunit biogenesis GTPase RsgA (291 aa).

A CP-type G domain is found at 63–221; that stretch reads KNEIKRPPVS…IADTPGFSAL (159 aa). Residues 112–115 and 164–172 each bind GTP; these read TKKD and GQSGVGKST. Zn(2+) is bound by residues Cys-245, Cys-250, His-252, and Cys-258.

The protein belongs to the TRAFAC class YlqF/YawG GTPase family. RsgA subfamily. In terms of assembly, monomer. Associates with 30S ribosomal subunit, binds 16S rRNA. It depends on Zn(2+) as a cofactor.

The protein localises to the cytoplasm. In terms of biological role, one of several proteins that assist in the late maturation steps of the functional core of the 30S ribosomal subunit. Helps release RbfA from mature subunits. May play a role in the assembly of ribosomal proteins into the subunit. Circularly permuted GTPase that catalyzes slow GTP hydrolysis, GTPase activity is stimulated by the 30S ribosomal subunit. The polypeptide is Small ribosomal subunit biogenesis GTPase RsgA (Staphylococcus saprophyticus subsp. saprophyticus (strain ATCC 15305 / DSM 20229 / NCIMB 8711 / NCTC 7292 / S-41)).